The following is a 396-amino-acid chain: Elongation factor Tu (396 aa).

The tr-type G domain occupies Lys10 to Glu206. The tract at residues Gly19 to Thr26 is G1. A GTP-binding site is contributed by Gly19 to Thr26. Thr26 is a Mg(2+) binding site. Positions Gly60 to Ala64 are G2. Residues Asp81–Gly84 are G3. Residues Asp81 to His85 and Asn136 to Asp139 each bind GTP. The G4 stretch occupies residues Asn136 to Asp139. The tract at residues Ser174 to Leu176 is G5.

This sequence belongs to the TRAFAC class translation factor GTPase superfamily. Classic translation factor GTPase family. EF-Tu/EF-1A subfamily. Monomer.

It is found in the cytoplasm. The catalysed reaction is GTP + H2O = GDP + phosphate + H(+). GTP hydrolase that promotes the GTP-dependent binding of aminoacyl-tRNA to the A-site of ribosomes during protein biosynthesis. The sequence is that of Elongation factor Tu from Methylococcus capsulatus (strain ATCC 33009 / NCIMB 11132 / Bath).